A 429-amino-acid chain; its full sequence is Oxysterol-binding protein-like protein OBPalpha (429 aa).

The protein belongs to the OSBP family.

In Candida albicans (strain SC5314 / ATCC MYA-2876) (Yeast), this protein is Oxysterol-binding protein-like protein OBPalpha (OBPALPHA).